A 504-amino-acid chain; its full sequence is MSFSVDMLANIAIELQRGIGHQDRFQRLITTLRQVLECDASALLRYDSRQFIPLAIDGLAKDVLGRRFALEGHPRLEAIARAGDVVRFPADSELPDPYDGLIPGQESLKVHACVGLPLFAGQNLIGALTLDGMQPDQFDVFSDEELRLIAALAAGALSNALLIEQLESQNMLPGDAAPFEALKETQMIGLSPGMTQLKKEIEIVAASDLNVLISGETGTGKELVAKAIHEASPRAVNPLVYLNCAALPESVAESELFGHVKGAFTGAISNRSGKFEMADNGTLFLDEIGELSLALQAKLLRVLQYGDIQRVGDDRSLRVDVRVLAATNRDLREEVLAGRFRADLFHRLSVFPLSVPPLRERGDDVILLAGYFCEQCRLRLGLSRVVLSSGARNLLQHYSFPGNVRELEHAIHRAVVLARATRSGDEVILEAQHFAFPEVTLPPPEAAAVPIVKQNLREATEAFQRETIRQAQAQNHHNWAASARMLETDVANLHRLAKRLGLKD.

D57 is modified (4-aspartylphosphate). The region spanning 187–416 (MIGLSPGMTQ…LEHAIHRAVV (230 aa)) is the Sigma-54 factor interaction domain. ATP-binding positions include 215-222 (GETGTGKE) and 278-287 (ADNGTLFLDE). The H-T-H motif DNA-binding region spans 479-498 (WAASARMLETDVANLHRLAK).

It participates in nitrogen metabolism; nitric oxide reduction. Its function is as follows. Required for the expression of anaerobic nitric oxide (NO) reductase, acts as a transcriptional activator for at least the norVW operon. Activation also requires sigma-54. The polypeptide is Anaerobic nitric oxide reductase transcription regulator NorR (Escherichia coli O7:K1 (strain IAI39 / ExPEC)).